The sequence spans 61 residues: MAKTSMIIKAQRGSKFKVREYNRCPLCGRPRAYYRKFDMCRICLRKLASSGQIPGVIKSSW.

Residues cysteine 24, cysteine 27, cysteine 40, and cysteine 43 each contribute to the Zn(2+) site.

The protein belongs to the universal ribosomal protein uS14 family. Zinc-binding uS14 subfamily. As to quaternary structure, part of the 30S ribosomal subunit. Contacts proteins S3 and S10. Zn(2+) serves as cofactor.

In terms of biological role, binds 16S rRNA, required for the assembly of 30S particles and may also be responsible for determining the conformation of the 16S rRNA at the A site. This chain is Small ribosomal subunit protein uS14, found in Geotalea daltonii (strain DSM 22248 / JCM 15807 / FRC-32) (Geobacter daltonii).